Reading from the N-terminus, the 605-residue chain is MSTVAPPADQAADVLKKLSLDSKSRTLEIPEPTKKTGVYQYGAMDSNGQVPSFDRSLSPMLPSDALDPSVFYVPNVYQQPYYYGYGSDYTGYTNSESVDMTSGAYGENASLVYPQGYGYAAFPYSPATSPAPQLGGDGQLYGAQQYQYPFPLTASSGPFASSVPASTQSKLSTNKAANSASAGIPKGMNGSAPVKPLNQSALYGNSALGGGLAAGYQDPRYSYDGFYTPVSWHDGSNFSDVQRSVSGSGVASSYSKANNNVPATRNQNSSSNSHYTSMYQPASMTGYAAQGYYDRVSPNKSYGQYGSTVRSGMGYGSSGYGSRTNERGWLNTDNKYRSRGRGNSYFYGNENIDGLNELNRGPRAKGTKATEEVSSEEVKKQTFDESNTEETVTCVLPDREECNRDDFPVEYKDAKFFIIKSYSEDDVHKSIKYNVWASTPNGNKKLDAAYQEAQQKSSGCPVFLFFSVNASGQFIGLAEMKGPVDFNKNIEYWQQDKWTGSFPLKWHILKDVPNSLLKHITLEYNENKPVTNSRDTQEVKLEQGLKVVKIFKEHNSKTCILDDFSFYEARQKTILEKKAKQQQSQKQVWEGKTNDEKPGTVDSTM.

Disordered stretches follow at residues Gly249 to His274 and Glu357 to Asp384. Residues Lys256–His274 are compositionally biased toward polar residues. A compositionally biased stretch (basic and acidic residues) spans Lys368 to Phe383. The region spanning Ala414–Phe551 is the YTH domain. Residues Lys420–Tyr422, Asp426, Trp436–Ala437, Asn469, Trp493, Trp498, and Trp506 contribute to the RNA site. Residues Lys580–Met605 are disordered.

Expressed in the shoot apex, at the sites of leaf formation, and in emerging leaves.

The protein localises to the cytoplasm. Specifically recognizes and binds N6-methyladenosine (m6A)-containing RNAs, and regulates mRNA stability. M6A is a modification present at internal sites of mRNAs and some non-coding RNAs and plays a role in mRNA stability and processing. Required for the correct timing of leaf formation and normal leaf morphology. The sequence is that of YTH domain-containing protein ECT4 from Arabidopsis thaliana (Mouse-ear cress).